Here is a 433-residue protein sequence, read N- to C-terminus: Serine--tRNA ligase (433 aa).

235–237 (TSE) provides a ligand contact to L-serine. Position 266–268 (266–268 (RSE)) interacts with ATP. Glutamate 289 lines the L-serine pocket. An ATP-binding site is contributed by 353–356 (EISS). Serine 388 contributes to the L-serine binding site.

This sequence belongs to the class-II aminoacyl-tRNA synthetase family. Type-1 seryl-tRNA synthetase subfamily. In terms of assembly, homodimer. The tRNA molecule binds across the dimer.

It is found in the cytoplasm. The catalysed reaction is tRNA(Ser) + L-serine + ATP = L-seryl-tRNA(Ser) + AMP + diphosphate + H(+). The enzyme catalyses tRNA(Sec) + L-serine + ATP = L-seryl-tRNA(Sec) + AMP + diphosphate + H(+). It functions in the pathway aminoacyl-tRNA biosynthesis; selenocysteinyl-tRNA(Sec) biosynthesis; L-seryl-tRNA(Sec) from L-serine and tRNA(Sec): step 1/1. Functionally, catalyzes the attachment of serine to tRNA(Ser). Is also able to aminoacylate tRNA(Sec) with serine, to form the misacylated tRNA L-seryl-tRNA(Sec), which will be further converted into selenocysteinyl-tRNA(Sec). This chain is Serine--tRNA ligase, found in Burkholderia pseudomallei (strain 1106a).